A 62-amino-acid chain; its full sequence is Large ribosomal subunit protein bL28 (62 aa).

The protein belongs to the bacterial ribosomal protein bL28 family.

The polypeptide is Large ribosomal subunit protein bL28 (Streptococcus thermophilus (strain CNRZ 1066)).